Here is a 331-residue protein sequence, read N- to C-terminus: Anthranilate phosphoribosyltransferase (331 aa).

5-phospho-alpha-D-ribose 1-diphosphate contacts are provided by residues G81, G84–D85, S89, N91–T94, K109–S117, and S121. Position 81 (G81) interacts with anthranilate. S93 contributes to the Mg(2+) binding site. N112 lines the anthranilate pocket. R167 contacts anthranilate. Positions 226 and 227 each coordinate Mg(2+).

The protein belongs to the anthranilate phosphoribosyltransferase family. Homodimer. Requires Mg(2+) as cofactor.

The enzyme catalyses N-(5-phospho-beta-D-ribosyl)anthranilate + diphosphate = 5-phospho-alpha-D-ribose 1-diphosphate + anthranilate. It participates in amino-acid biosynthesis; L-tryptophan biosynthesis; L-tryptophan from chorismate: step 2/5. Functionally, catalyzes the transfer of the phosphoribosyl group of 5-phosphorylribose-1-pyrophosphate (PRPP) to anthranilate to yield N-(5'-phosphoribosyl)-anthranilate (PRA). This chain is Anthranilate phosphoribosyltransferase, found in Oleidesulfovibrio alaskensis (strain ATCC BAA-1058 / DSM 17464 / G20) (Desulfovibrio alaskensis).